The primary structure comprises 67 residues: Small ribosomal subunit protein eS17 (67 aa).

The protein belongs to the eukaryotic ribosomal protein eS17 family.

The chain is Small ribosomal subunit protein eS17 from Haloquadratum walsbyi (strain DSM 16790 / HBSQ001).